The primary structure comprises 629 residues: Methyl-accepting chemotaxis protein PscA (629 aa).

Over 1 to 9 (MKNLGFSKK) the chain is Cytoplasmic. A helical transmembrane segment spans residues 10–30 (ILLAAALIVVVAFSVFIVIND). Over 31 to 276 (YRQRQSLKSS…AYAMLTEFRT (246 aa)) the chain is Periplasmic. One can recognise a Cache domain in the interval 36 to 258 (SLKSSVKSEL…QGVATANWYV (223 aa)). The helical transmembrane segment at 277–297 (SAITAMVVVVMVIILLLGPLI) threads the bilayer. An HAMP domain is found at 298–352 (RVLMQPLHQMGRAMRDIADGEGDLTKRLAITSHDEFGALAESFNHFVERIHTSIR). The Cytoplasmic portion of the chain corresponds to 298–629 (RVLMQPLHQM…LQQLVGSFRI (332 aa)). The Methyl-accepting transducer domain occupies 357–593 (TAAQLGEVAT…SINVDITHIN (237 aa)).

This sequence belongs to the methyl-accepting chemotaxis (MCP) protein family.

The protein localises to the cell inner membrane. In terms of biological role, chemotactic-signal transducers respond to changes in the concentration of attractants and repellents in the environment, transduce a signal from the outside to the inside of the cell, and facilitate sensory adaptation through the variation of the level of methylation. PscA recognizes specifically and with high affinity L-Asp, D-Asp and L-Glu. It exerts a double function, in mediating chemotaxis to these amino acids and in modulating cyclic di-GMP (c-di-GMP) levels, causing alterations in biofilm development. Plays a key role in the infection process. It may facilitate bacterial entry into the plant. This chain is Methyl-accepting chemotaxis protein PscA, found in Pseudomonas syringae pv. tomato (strain ATCC BAA-871 / DC3000).